The following is a 440-amino-acid chain: GTPase Der (440 aa).

EngA-type G domains are found at residues 3–167 and 176–351; these read PIIA…PYDR and TRIA…EQYC. Residues 9 to 16, 56 to 60, 119 to 122, 182 to 189, 229 to 233, and 294 to 297 each bind GTP; these read GRPNVGKS, DTGGF, NKVD, DTAGI, and NKWD. The KH-like domain occupies 352-436; that stretch reads KRVTTGELNR…PLKLIFRGRD (85 aa).

The protein belongs to the TRAFAC class TrmE-Era-EngA-EngB-Septin-like GTPase superfamily. EngA (Der) GTPase family. In terms of assembly, associates with the 50S ribosomal subunit.

Functionally, GTPase that plays an essential role in the late steps of ribosome biogenesis. The sequence is that of GTPase Der from Citrifermentans bemidjiense (strain ATCC BAA-1014 / DSM 16622 / JCM 12645 / Bem) (Geobacter bemidjiensis).